The following is a 155-amino-acid chain: Ribonuclease H (155 aa).

The RNase H type-1 domain occupies 9–150 (DGQQVEMWTD…ADALANQGME (142 aa)). Asp18, Glu56, Asp78, and Asp142 together coordinate Mg(2+).

It belongs to the RNase H family. Monomer. Requires Mg(2+) as cofactor.

The protein localises to the cytoplasm. The catalysed reaction is Endonucleolytic cleavage to 5'-phosphomonoester.. Functionally, endonuclease that specifically degrades the RNA of RNA-DNA hybrids. This chain is Ribonuclease H, found in Bordetella pertussis (strain Tohama I / ATCC BAA-589 / NCTC 13251).